Consider the following 147-residue polypeptide: Hemoglobin subunit rho (147 aa).

The region spanning 3–147 (HWSAEEKQLI…VAHALAYKYH (145 aa)) is the Globin domain. Positions 64 and 93 each coordinate heme b.

The protein belongs to the globin family.

The rho chain is the major early embryonic beta-type hemoglobin chain. The protein is Hemoglobin subunit rho of Gallus gallus (Chicken).